The sequence spans 163 residues: MIDNDGYRLNVGIVICNKKGQVLWAKRYGQYSWQFPQGGIHLTESPEEAMYRELFEELGLNKKDVRILTSTHYWLRYKLPKHLVRWNTDPVCIGQKQRWFLLELTCDDSNINVECTKAPEFDGWCWVSFWYPVRQVVSFKRDVYRQVMKEFFSFVSLIQKHLI.

The 144-residue stretch at 6–149 folds into the Nudix hydrolase domain; the sequence is GYRLNVGIVI…KRDVYRQVMK (144 aa). The Nudix box motif lies at 38–59; it reads GGIHLTESPEEAMYRELFEELG.

The protein belongs to the Nudix hydrolase family. RppH subfamily. A divalent metal cation serves as cofactor.

In terms of biological role, accelerates the degradation of transcripts by removing pyrophosphate from the 5'-end of triphosphorylated RNA, leading to a more labile monophosphorylated state that can stimulate subsequent ribonuclease cleavage. This Hamiltonella defensa subsp. Acyrthosiphon pisum (strain 5AT) protein is RNA pyrophosphohydrolase.